Consider the following 327-residue polypeptide: Elongation factor P--(R)-beta-lysine ligase (327 aa).

Position 80–82 (80–82) interacts with substrate; it reads SPE. Residues 104–106 and Asn113 contribute to the ATP site; that span reads RNE. Tyr122 provides a ligand contact to substrate. Residue 246–247 coordinates ATP; that stretch reads EL. Glu253 lines the substrate pocket. Residue Gly302 coordinates ATP.

It belongs to the class-II aminoacyl-tRNA synthetase family. EpmA subfamily. As to quaternary structure, homodimer.

The catalysed reaction is D-beta-lysine + L-lysyl-[protein] + ATP = N(6)-((3R)-3,6-diaminohexanoyl)-L-lysyl-[protein] + AMP + diphosphate + H(+). Its function is as follows. With EpmB is involved in the beta-lysylation step of the post-translational modification of translation elongation factor P (EF-P). Catalyzes the ATP-dependent activation of (R)-beta-lysine produced by EpmB, forming a lysyl-adenylate, from which the beta-lysyl moiety is then transferred to the epsilon-amino group of a conserved specific lysine residue in EF-P. This chain is Elongation factor P--(R)-beta-lysine ligase, found in Haemophilus ducreyi (strain 35000HP / ATCC 700724).